Reading from the N-terminus, the 141-residue chain is Nucleoside diphosphate kinase (141 aa).

The ATP site is built by K9, F57, R85, T91, R102, and N112. H115 serves as the catalytic Pros-phosphohistidine intermediate.

This sequence belongs to the NDK family. In terms of assembly, homotetramer. Requires Mg(2+) as cofactor.

It is found in the cytoplasm. It carries out the reaction a 2'-deoxyribonucleoside 5'-diphosphate + ATP = a 2'-deoxyribonucleoside 5'-triphosphate + ADP. The enzyme catalyses a ribonucleoside 5'-diphosphate + ATP = a ribonucleoside 5'-triphosphate + ADP. Major role in the synthesis of nucleoside triphosphates other than ATP. The ATP gamma phosphate is transferred to the NDP beta phosphate via a ping-pong mechanism, using a phosphorylated active-site intermediate. This chain is Nucleoside diphosphate kinase, found in Chlamydia trachomatis serovar L2 (strain ATCC VR-902B / DSM 19102 / 434/Bu).